Consider the following 417-residue polypeptide: MLKREMNIADYDAELWQAMEQEKVRQEEHIELIASENYTSPRVMQAQGSQLTNKYAEGYPGKRYYGGCEYVDVVEQLAIDRAKELFGADYANVQPHSGSQANFAVYTALLQPGDTVLGMNLAQGGHLTHGSPVNFSGKLYNIVPYGIDESGKIDYEEMAKLAQTHKPKMIIGGFSAYSGVVDWAKMREIADSIGAYLFVDMAHVAGLIAADVYPNPVPHAHVVTTTTHKTLAGPRGGLILAKGGDEELYKKLNSAVFPSAQGGPLMHVIAGKAVALKEAMEPEFKVYQQQVAKNAKAMVEVFLNRGYKVVSGGTENHLFLLDLVDKNLTGKEADAALGRANITVNKNSVPNDPKSPFVTSGIRIGSPAITRRGFKEAEAKELAGWMCDVLDNINDEAVIERIKGKVLDICARFPVYA.

(6S)-5,6,7,8-tetrahydrofolate-binding positions include L121 and G125–L127. At K229 the chain carries N6-(pyridoxal phosphate)lysine. S355 to F357 provides a ligand contact to (6S)-5,6,7,8-tetrahydrofolate.

It belongs to the SHMT family. As to quaternary structure, homodimer. Pyridoxal 5'-phosphate serves as cofactor.

It is found in the cytoplasm. It catalyses the reaction (6R)-5,10-methylene-5,6,7,8-tetrahydrofolate + glycine + H2O = (6S)-5,6,7,8-tetrahydrofolate + L-serine. The protein operates within one-carbon metabolism; tetrahydrofolate interconversion. Its pathway is amino-acid biosynthesis; glycine biosynthesis; glycine from L-serine: step 1/1. In terms of biological role, catalyzes the reversible interconversion of serine and glycine with tetrahydrofolate (THF) serving as the one-carbon carrier. This reaction serves as the major source of one-carbon groups required for the biosynthesis of purines, thymidylate, methionine, and other important biomolecules. Also exhibits THF-independent aldolase activity toward beta-hydroxyamino acids, producing glycine and aldehydes, via a retro-aldol mechanism. In Citrobacter koseri (strain ATCC BAA-895 / CDC 4225-83 / SGSC4696), this protein is Serine hydroxymethyltransferase.